The primary structure comprises 123 residues: Large ribosomal subunit protein bL12 (123 aa).

It belongs to the bacterial ribosomal protein bL12 family. Homodimer. Part of the ribosomal stalk of the 50S ribosomal subunit. Forms a multimeric L10(L12)X complex, where L10 forms an elongated spine to which 2 to 4 L12 dimers bind in a sequential fashion. Binds GTP-bound translation factors.

Functionally, forms part of the ribosomal stalk which helps the ribosome interact with GTP-bound translation factors. Is thus essential for accurate translation. The protein is Large ribosomal subunit protein bL12 of Dehalococcoides mccartyi (strain ATCC BAA-2100 / JCM 16839 / KCTC 5957 / BAV1).